The chain runs to 1184 residues: Protein stu1 (1184 aa).

HEAT repeat units lie at residues 92–130 and 162–194; these read FCPV…EHYV and RSYV…FQGA. 2 stretches are compositionally biased toward basic and acidic residues: residues 229 to 240 and 308 to 317; these read SSTARPRSRVEP and EAEKAPHMET. Positions 229 to 336 are disordered; it reads SSTARPRSRV…APQPLHAETS (108 aa). The stretch at 463–499 is one HEAT 3 repeat; it reads VTYTPRLLQHVTSACQDKNAQLRLFAAGWLKTLLNKQ. Disordered regions lie at residues 564–584 and 602–906; these read LEKD…SDTL and ARLA…RVEE. The span at 572-584 shows a compositional bias: polar residues; the sequence is NRDQSSYLSSDTL. Over residues 640–649 the composition is skewed to low complexity; it reads APLSSLSSAP. The span at 723–737 shows a compositional bias: polar residues; sequence SASNENETQVATQVA. Basic and acidic residues-rich tracts occupy residues 787–811 and 882–895; these read AGRH…ENKL and EQDR…DSAE.

It belongs to the CLASP family. As to quaternary structure, interacts with microtubules.

It is found in the cytoplasm. The protein localises to the cytoskeleton. The protein resides in the nucleus. It localises to the spindle. Its function is as follows. Microtubule binding protein that promotes the stabilization of dynamic microtubules. Required for mitotic spindle formation. In Aspergillus oryzae (strain ATCC 42149 / RIB 40) (Yellow koji mold), this protein is Protein stu1 (stu1).